A 329-amino-acid polypeptide reads, in one-letter code: Palmitoyltransferase pfa3 (329 aa).

The next 5 helical transmembrane spans lie at 14-34 (VLVI…MSGV), 49-69 (VGII…LTNL), 141-161 (FFFL…YSTF), 177-197 (AIYL…SIVM), and 243-263 (IMGK…GEGV). Positions 97-147 (RFCEKCQEYKCDRSHHCSQCNKCILRMDHHCMWFKNCVGFRNHKFFFLECF) constitute a DHHC domain.

This sequence belongs to the DHHC palmitoyltransferase family. PFA3 subfamily. Autopalmitoylated.

The protein resides in the vacuole membrane. Its subcellular location is the golgi apparatus membrane. It catalyses the reaction L-cysteinyl-[protein] + hexadecanoyl-CoA = S-hexadecanoyl-L-cysteinyl-[protein] + CoA. In terms of biological role, palmitoyltransferase specific for VAC8. Palmitoylates VAC8 at one or more of its N-terminal cysteine residues, which is required for its proper membrane localization. This Schizosaccharomyces pombe (strain 972 / ATCC 24843) (Fission yeast) protein is Palmitoyltransferase pfa3 (pfa3).